The sequence spans 278 residues: 4-deoxy-L-threo-5-hexosulose-uronate ketol-isomerase (278 aa).

His-196, His-198, Glu-203, and His-245 together coordinate Zn(2+).

The protein belongs to the KduI family. Requires Zn(2+) as cofactor.

The enzyme catalyses 5-dehydro-4-deoxy-D-glucuronate = 3-deoxy-D-glycero-2,5-hexodiulosonate. The protein operates within glycan metabolism; pectin degradation; 2-dehydro-3-deoxy-D-gluconate from pectin: step 4/5. Catalyzes the isomerization of 5-dehydro-4-deoxy-D-glucuronate to 3-deoxy-D-glycero-2,5-hexodiulosonate. The chain is 4-deoxy-L-threo-5-hexosulose-uronate ketol-isomerase from Edwardsiella ictaluri (strain 93-146).